A 445-amino-acid chain; its full sequence is Argininosuccinate synthase (445 aa).

ATP-binding positions include 17–25 and Ala-43; that span reads AFSGGLDTS. Tyr-99 is a binding site for L-citrulline. 2 residues coordinate ATP: Gly-129 and Thr-131. L-aspartate is bound by residues Thr-131, Asn-135, and Asp-136. Asn-135 contributes to the L-citrulline binding site. Asp-136 lines the ATP pocket. Positions 139 and 192 each coordinate L-citrulline. Asp-194 lines the ATP pocket. L-citrulline contacts are provided by Thr-201, Glu-203, and Glu-280.

It belongs to the argininosuccinate synthase family. Type 2 subfamily. Homotetramer.

It is found in the cytoplasm. The catalysed reaction is L-citrulline + L-aspartate + ATP = 2-(N(omega)-L-arginino)succinate + AMP + diphosphate + H(+). It participates in amino-acid biosynthesis; L-arginine biosynthesis; L-arginine from L-ornithine and carbamoyl phosphate: step 2/3. This Bradyrhizobium diazoefficiens (strain JCM 10833 / BCRC 13528 / IAM 13628 / NBRC 14792 / USDA 110) protein is Argininosuccinate synthase (argG).